A 217-amino-acid polypeptide reads, in one-letter code: Probable transaldolase (217 aa).

Lys83 acts as the Schiff-base intermediate with substrate in catalysis.

Belongs to the transaldolase family. Type 3B subfamily.

It is found in the cytoplasm. The enzyme catalyses D-sedoheptulose 7-phosphate + D-glyceraldehyde 3-phosphate = D-erythrose 4-phosphate + beta-D-fructose 6-phosphate. The protein operates within carbohydrate degradation; pentose phosphate pathway; D-glyceraldehyde 3-phosphate and beta-D-fructose 6-phosphate from D-ribose 5-phosphate and D-xylulose 5-phosphate (non-oxidative stage): step 2/3. Transaldolase is important for the balance of metabolites in the pentose-phosphate pathway. The sequence is that of Probable transaldolase from Lactiplantibacillus plantarum (strain ATCC BAA-793 / NCIMB 8826 / WCFS1) (Lactobacillus plantarum).